We begin with the raw amino-acid sequence, 654 residues long: Biotin-dependent 3-methylcrotonyl-coenzyme A carboxylase alpha1 subunit (654 aa).

In terms of domain architecture, Biotin carboxylation spans 1-448 (MFDTVLVANR…DTAVLDERSA (448 aa)). The ATP-grasp domain maps to 120–319 (KNAVAAFDVP…LVEWQLRVGA (200 aa)). An ATP-binding site is contributed by 148–209 (AAEVGYPVLI…ERFVLRPRHI (62 aa)). Residues Glu-275, Glu-290, and Asn-292 each coordinate Mg(2+). 3 residues coordinate Mn(2+): Glu-275, Glu-290, and Asn-292. The Biotinyl-binding domain occupies 578-653 (HRAVGARPAE…KVEQVLARIK (76 aa)). Lys-620 bears the N6-biotinyllysine mark.

As to quaternary structure, the biotin-dependent acyl-CoA carboxylase complex is composed of AccA1, which contains the biotin carboxylase (BC) and biotin carboxyl carrier protein (BCCP) domains, and AccD1, which contains the carboxyl transferase (CT) domain. The AccA1/AccD1 complex forms a dodecamer. The cofactor is Mg(2+). It depends on Mn(2+) as a cofactor. Biotin serves as cofactor.

The catalysed reaction is N(6)-biotinyl-L-lysyl-[protein] + hydrogencarbonate + ATP = N(6)-carboxybiotinyl-L-lysyl-[protein] + ADP + phosphate + H(+). It participates in amino-acid degradation; L-leucine degradation. In terms of biological role, component of a biotin-dependent acyl-CoA carboxylase complex. This subunit catalyzes the ATP-dependent carboxylation of the biotin carried by the biotin carboxyl carrier (BCC) domain, resulting in the formation of carboxyl biotin. When associated with the beta1 subunit AccD1, is involved in branched amino-acid catabolism with methylcrotonyl coenzyme A as the substrate. This is Biotin-dependent 3-methylcrotonyl-coenzyme A carboxylase alpha1 subunit (accA1) from Mycobacterium bovis (strain ATCC BAA-935 / AF2122/97).